A 103-amino-acid chain; its full sequence is N(4)-acetylcytidine amidohydrolase (103 aa).

Residues 6–101 enclose the ASCH domain; it reads ITFFQRFQDD…QTQFYVIEFK (96 aa). The active-site Proton acceptor is the Lys-21. Residue Thr-24 is the Nucleophile of the active site. Residue Glu-74 is the Proton donor of the active site.

The protein belongs to the N(4)-acetylcytidine amidohydrolase family.

It catalyses the reaction N(4)-acetylcytidine + H2O = cytidine + acetate + H(+). The catalysed reaction is N(4)-acetyl-2'-deoxycytidine + H2O = 2'-deoxycytidine + acetate + H(+). It carries out the reaction N(4)-acetylcytosine + H2O = cytosine + acetate + H(+). Catalyzes the hydrolysis of N(4)-acetylcytidine (ac4C). The polypeptide is N(4)-acetylcytidine amidohydrolase (yqfB) (Escherichia coli O127:H6 (strain E2348/69 / EPEC)).